The sequence spans 226 residues: UPF0758 protein SPD_0975 (226 aa).

The 123-residue stretch at 103-225 (SILSSQKLAK…YFSYREKTDL (123 aa)) folds into the MPN domain. His174, His176, and Asp187 together coordinate Zn(2+). The JAMM motif motif lies at 174–187 (HNHPSGAVAPSQND).

Belongs to the UPF0758 family.

The polypeptide is UPF0758 protein SPD_0975 (Streptococcus pneumoniae serotype 2 (strain D39 / NCTC 7466)).